Reading from the N-terminus, the 161-residue chain is 2-C-methyl-D-erythritol 2,4-cyclodiphosphate synthase (161 aa).

A divalent metal cation contacts are provided by Asp-11 and His-13. Residues 11 to 13 (DIH) and 37 to 38 (HS) contribute to the 4-CDP-2-C-methyl-D-erythritol 2-phosphate site. His-45 provides a ligand contact to a divalent metal cation. 4-CDP-2-C-methyl-D-erythritol 2-phosphate-binding positions include 59–61 (DIG), 135–138 (TTNE), and Arg-145.

It belongs to the IspF family. In terms of assembly, homotrimer. Requires a divalent metal cation as cofactor.

It catalyses the reaction 4-CDP-2-C-methyl-D-erythritol 2-phosphate = 2-C-methyl-D-erythritol 2,4-cyclic diphosphate + CMP. Its pathway is isoprenoid biosynthesis; isopentenyl diphosphate biosynthesis via DXP pathway; isopentenyl diphosphate from 1-deoxy-D-xylulose 5-phosphate: step 4/6. Involved in the biosynthesis of isopentenyl diphosphate (IPP) and dimethylallyl diphosphate (DMAPP), two major building blocks of isoprenoid compounds. Catalyzes the conversion of 4-diphosphocytidyl-2-C-methyl-D-erythritol 2-phosphate (CDP-ME2P) to 2-C-methyl-D-erythritol 2,4-cyclodiphosphate (ME-CPP) with a corresponding release of cytidine 5-monophosphate (CMP). The chain is 2-C-methyl-D-erythritol 2,4-cyclodiphosphate synthase from Synechocystis sp. (strain ATCC 27184 / PCC 6803 / Kazusa).